We begin with the raw amino-acid sequence, 347 residues long: 3-keto-steroid reductase ERG27 (347 aa).

The NADP(+) site is built by Leu-15, Thr-38, and Arg-44. Catalysis depends on proton donor residues Ser-179 and Tyr-202. NADP(+) is bound by residues Tyr-202, Lys-206, and Ser-237. The active-site Lowers pKa of active site Tyr is the Lys-206. Residue Thr-345 is modified to Phosphothreonine.

Belongs to the short-chain dehydrogenases/reductases (SDR) family. ERG27 subfamily. In terms of assembly, heterotetramer of ERG25, ERG26, ERG27 and ERG28. ERG28 acts as a scaffold to tether ERG27 and other 4,4-demethylation-related enzymes, forming a demethylation enzyme complex, in the endoplasmic reticulum. Interacts with ERG25 and ERG28. Also interacts with ERG7, but only in lipid particles.

Its subcellular location is the endoplasmic reticulum membrane. The protein localises to the lipid droplet. It catalyses the reaction 3-dehydro-4alpha-methylzymosterol + NADPH + H(+) = 4alpha-methylzymosterol + NADP(+). Its pathway is steroid biosynthesis; zymosterol biosynthesis; zymosterol from lanosterol: step 5/6. Functionally, 3-keto-steroid reductase; part of the third module of ergosterol biosynthesis pathway that includes the late steps of the pathway. ERG27 is a catalytic component of the C-4 demethylation complex that catalyze the reduction of the keto group on the C-3. The third module or late pathway involves the ergosterol synthesis itself through consecutive reactions that mainly occur in the endoplasmic reticulum (ER) membrane. Firstly, the squalene synthase ERG9 catalyzes the condensation of 2 farnesyl pyrophosphate moieties to form squalene, which is the precursor of all steroids. Squalene synthase is crucial for balancing the incorporation of farnesyl diphosphate (FPP) into sterol and nonsterol isoprene synthesis. Secondly, the squalene epoxidase ERG1 catalyzes the stereospecific oxidation of squalene to (S)-2,3-epoxysqualene, which is considered to be a rate-limiting enzyme in steroid biosynthesis. Then, the lanosterol synthase ERG7 catalyzes the cyclization of (S)-2,3 oxidosqualene to lanosterol, a reaction that forms the sterol core. In the next steps, lanosterol is transformed to zymosterol through a complex process involving various demethylation, reduction and desaturation reactions. The lanosterol 14-alpha-demethylase ERG11 (also known as CYP51) catalyzes C14-demethylation of lanosterol to produce 4,4'-dimethyl cholesta-8,14,24-triene-3-beta-ol, which is critical for ergosterol biosynthesis. The C-14 reductase ERG24 reduces the C14=C15 double bond of 4,4-dimethyl-cholesta-8,14,24-trienol to produce 4,4-dimethyl-cholesta-8,24-dienol. 4,4-dimethyl-cholesta-8,24-dienol is substrate of the C-4 demethylation complex ERG25-ERG26-ERG27 in which ERG25 catalyzes the three-step monooxygenation required for the demethylation of 4,4-dimethyl and 4alpha-methylsterols, ERG26 catalyzes the oxidative decarboxylation that results in a reduction of the 3-beta-hydroxy group at the C-3 carbon to an oxo group, and ERG27 is responsible for the reduction of the keto group on the C-3. ERG28 has a role as a scaffold to help anchor ERG25, ERG26 and ERG27 to the endoplasmic reticulum and ERG29 regulates the activity of the iron-containing C4-methylsterol oxidase ERG25. Then, the sterol 24-C-methyltransferase ERG6 catalyzes the methyl transfer from S-adenosyl-methionine to the C-24 of zymosterol to form fecosterol. The C-8 sterol isomerase ERG2 catalyzes the reaction which results in unsaturation at C-7 in the B ring of sterols and thus converts fecosterol to episterol. The sterol-C5-desaturase ERG3 then catalyzes the introduction of a C-5 double bond in the B ring to produce 5-dehydroepisterol. The C-22 sterol desaturase ERG5 further converts 5-dehydroepisterol into ergosta-5,7,22,24(28)-tetraen-3beta-ol by forming the C-22(23) double bond in the sterol side chain. Finally, ergosta-5,7,22,24(28)-tetraen-3beta-ol is substrate of the C-24(28) sterol reductase ERG4 to produce ergosterol. In terms of biological role, facilitates the association of ERG7 with lipid particles preventing its digestion in the endoplasmic reticulum and the lipid particles. This chain is 3-keto-steroid reductase ERG27, found in Saccharomyces cerevisiae (strain ATCC 204508 / S288c) (Baker's yeast).